We begin with the raw amino-acid sequence, 457 residues long: Zinc finger protein ZPR1 (457 aa).

The segment covering 1 to 13 (MSTVSDPNSSNPP) has biased composition (polar residues). The segment at 1–21 (MSTVSDPNSSNPPESAGNIRP) is disordered. 2 C4-type zinc fingers span residues 43–75 (CMNC…CDHC) and 261–293 (CPSC…CGAC). Positions 414-457 (VQSLSDDDSEPDDKLTVERYDRSYEDNEDLGLNDMKTEGYEEKA) are disordered. Basic and acidic residues-rich tracts occupy residues 425–438 (DDKL…RSYE) and 448–457 (MKTEGYEEKA).

The protein belongs to the ZPR1 family.

Might mediate EGFR and FGFR signal transduction cascades required for lumen formation in tracheal cells. The sequence is that of Zinc finger protein ZPR1 from Drosophila melanogaster (Fruit fly).